Consider the following 513-residue polypeptide: 2,3-bisphosphoglycerate-independent phosphoglycerate mutase (513 aa).

Mn(2+) is bound by residues Asp13 and Ser63. Ser63 acts as the Phosphoserine intermediate in catalysis. Substrate is bound by residues His124, 154 to 155 (RD), Arg186, Arg192, 262 to 265 (RADR), and Lys335. 5 residues coordinate Mn(2+): Asp402, His406, Asp443, His444, and His462.

It belongs to the BPG-independent phosphoglycerate mutase family. Monomer. Requires Mn(2+) as cofactor.

It carries out the reaction (2R)-2-phosphoglycerate = (2R)-3-phosphoglycerate. The protein operates within carbohydrate degradation; glycolysis; pyruvate from D-glyceraldehyde 3-phosphate: step 3/5. Catalyzes the interconversion of 2-phosphoglycerate and 3-phosphoglycerate. The sequence is that of 2,3-bisphosphoglycerate-independent phosphoglycerate mutase from Shewanella amazonensis (strain ATCC BAA-1098 / SB2B).